Here is a 100-residue protein sequence, read N- to C-terminus: UPF0298 protein lp_2135 (100 aa).

It belongs to the UPF0298 family.

The protein resides in the cytoplasm. The polypeptide is UPF0298 protein lp_2135 (Lactiplantibacillus plantarum (strain ATCC BAA-793 / NCIMB 8826 / WCFS1) (Lactobacillus plantarum)).